The primary structure comprises 325 residues: Phenylalanine--tRNA ligase alpha subunit (325 aa).

Position 251 (E251) interacts with Mg(2+).

It belongs to the class-II aminoacyl-tRNA synthetase family. Phe-tRNA synthetase alpha subunit type 1 subfamily. In terms of assembly, tetramer of two alpha and two beta subunits. Requires Mg(2+) as cofactor.

It is found in the cytoplasm. The enzyme catalyses tRNA(Phe) + L-phenylalanine + ATP = L-phenylalanyl-tRNA(Phe) + AMP + diphosphate + H(+). The polypeptide is Phenylalanine--tRNA ligase alpha subunit (Thermotoga neapolitana (strain ATCC 49049 / DSM 4359 / NBRC 107923 / NS-E)).